The following is a 454-amino-acid chain: tRNA modification GTPase MnmE (454 aa).

3 residues coordinate (6S)-5-formyl-5,6,7,8-tetrahydrofolate: Arg23, Glu80, and Lys120. In terms of domain architecture, TrmE-type G spans 216–377 (GMRVVIAGRP…VREHLKACIG (162 aa)). K(+) is bound at residue Asn226. GTP-binding positions include 226 to 231 (NAGKSS), 245 to 251 (TEIAGTT), 270 to 273 (DTAG), and 335 to 338 (NKAD). Position 230 (Ser230) interacts with Mg(2+). 3 residues coordinate K(+): Thr245, Ile247, and Thr250. Residue Thr251 participates in Mg(2+) binding. Lys454 serves as a coordination point for (6S)-5-formyl-5,6,7,8-tetrahydrofolate.

This sequence belongs to the TRAFAC class TrmE-Era-EngA-EngB-Septin-like GTPase superfamily. TrmE GTPase family. In terms of assembly, homodimer. Heterotetramer of two MnmE and two MnmG subunits. The cofactor is K(+).

It is found in the cytoplasm. Functionally, exhibits a very high intrinsic GTPase hydrolysis rate. Involved in the addition of a carboxymethylaminomethyl (cmnm) group at the wobble position (U34) of certain tRNAs, forming tRNA-cmnm(5)s(2)U34. The protein is tRNA modification GTPase MnmE of Pseudoalteromonas translucida (strain TAC 125).